Here is a 302-residue protein sequence, read N- to C-terminus: Spermidine synthase (302 aa).

The residue at position 1 (Met-1) is an N-acetylmethionine. One can recognise a PABS domain in the interval 18–253 (EGWFRETCSL…GQIGFMLCSK (236 aa)). Gln-49 serves as a coordination point for S-adenosyl 3-(methylsulfanyl)propylamine. Position 79 (Tyr-79) interacts with putrescine. S-adenosyl 3-(methylsulfanyl)propylamine-binding positions include Gln-80, Asp-104, Glu-124, 155–156 (DG), and Asp-173. Asp-173 functions as the Proton acceptor in the catalytic mechanism. Putrescine is bound by residues 173-176 (DSSD) and Tyr-241.

Belongs to the spermidine/spermine synthase family. In terms of assembly, homodimer or homotetramer.

It carries out the reaction S-adenosyl 3-(methylsulfanyl)propylamine + putrescine = S-methyl-5'-thioadenosine + spermidine + H(+). The protein operates within amine and polyamine biosynthesis; spermidine biosynthesis; spermidine from putrescine: step 1/1. The activity is thought to be regulated mainly by the availability of decarboxylated S-adenosylmethionine. Catalyzes the production of spermidine from putrescine and decarboxylated S-adenosylmethionine (dcSAM). Has a strong preference for putrescine as substrate, and has very low activity towards 1,3-diaminopropane. Has extremely low activity towards spermidine. The protein is Spermidine synthase (Srm) of Mus musculus (Mouse).